A 217-amino-acid chain; its full sequence is EF-hand domain-containing protein D2 homolog (217 aa).

The span at 1–28 shows a compositional bias: low complexity; that stretch reads MSVSSNASSASNKDSVDSPSSTTNTDSS. The disordered stretch occupies residues 1–29; that stretch reads MSVSSNASSASNKDSVDSPSSTTNTDSSE. 2 EF-hand domains span residues 69–104 and 105–140; these read NQIK…LGAP and QTHL…AQAG. Residues Asp82, Asp86, Glu93, Asp118, Asp120, Asp122, Lys124, and Glu129 each coordinate Ca(2+). A compositionally biased stretch (basic and acidic residues) spans 191-204; it reads EQEERRREEEERAQ. The disordered stretch occupies residues 191–217; the sequence is EQEERRREEEERAQRRQQFQQRAAIFQ. Residues 206–217 show a composition bias toward low complexity; it reads RQQFQQRAAIFQ.

In Drosophila melanogaster (Fruit fly), this protein is EF-hand domain-containing protein D2 homolog (Swip-1).